We begin with the raw amino-acid sequence, 573 residues long: Peptidyl-prolyl cis-trans isomerase-like 2 (573 aa).

The region spanning 37–119 is the U-box domain; it reads QRLPFDCCAL…GNLHDPITYK (83 aa). Residues 223–247 form a disordered region; sequence KNKSGQSPAPTPSKIDDGKGQEKKE. Residues 236-247 show a composition bias toward basic and acidic residues; the sequence is KIDDGKGQEKKE. Residues 312-469 enclose the PPIase cyclophilin-type domain; it reads SKAYATITTN…RDIVIQGVTV (158 aa). The span at 489–510 shows a compositional bias: basic and acidic residues; the sequence is DQSDAALKRRAEAQKEREKDRT. The disordered stretch occupies residues 489–515; it reads DQSDAALKRRAEAQKEREKDRTTWLGT.

The protein belongs to the cyclophilin-type PPIase family. PPIL2 subfamily.

The protein localises to the nucleus. It carries out the reaction [protein]-peptidylproline (omega=180) = [protein]-peptidylproline (omega=0). The catalysed reaction is S-ubiquitinyl-[E2 ubiquitin-conjugating enzyme]-L-cysteine + [acceptor protein]-L-lysine = [E2 ubiquitin-conjugating enzyme]-L-cysteine + N(6)-ubiquitinyl-[acceptor protein]-L-lysine.. It functions in the pathway protein modification; protein ubiquitination. May catalyze the cis-trans isomerization of proline imidic peptide bonds in oligopeptides thereby assisting the folding of proteins. May also function as a chaperone, playing a role in intracellular transport of proteins. May also have a protein ubiquitin ligase activity acting as an E3 ubiquitin protein ligase or as a ubiquitin-ubiquitin ligase promoting elongation of ubiquitin chains on proteins. In Cryptococcus neoformans var. neoformans serotype D (strain B-3501A) (Filobasidiella neoformans), this protein is Peptidyl-prolyl cis-trans isomerase-like 2 (CYP8).